The following is a 691-amino-acid chain: DNA ligase (691 aa).

NAD(+)-binding positions include 41–45 (DAEYD), 90–91 (SL), and Glu130. The N6-AMP-lysine intermediate role is filled by Lys132. 4 residues coordinate NAD(+): Arg153, Glu190, Lys307, and Lys331. Positions 425, 428, 443, and 449 each coordinate Zn(2+). Residues 610 to 691 (APQGVLAGKT…LHQLLEGNTQ (82 aa)) form the BRCT domain.

This sequence belongs to the NAD-dependent DNA ligase family. LigA subfamily. It depends on Mg(2+) as a cofactor. Mn(2+) is required as a cofactor.

The enzyme catalyses NAD(+) + (deoxyribonucleotide)n-3'-hydroxyl + 5'-phospho-(deoxyribonucleotide)m = (deoxyribonucleotide)n+m + AMP + beta-nicotinamide D-nucleotide.. Functionally, DNA ligase that catalyzes the formation of phosphodiester linkages between 5'-phosphoryl and 3'-hydroxyl groups in double-stranded DNA using NAD as a coenzyme and as the energy source for the reaction. It is essential for DNA replication and repair of damaged DNA. This is DNA ligase from Burkholderia vietnamiensis (strain G4 / LMG 22486) (Burkholderia cepacia (strain R1808)).